The following is a 664-amino-acid chain: Zinc finger protein 800 (664 aa).

The C2H2-type 1; degenerate zinc-finger motif lies at 69-91 (FECKLCRSLFRGLPNLITHKKFY). Lys132 participates in a covalent cross-link: Glycyl lysine isopeptide (Lys-Gly) (interchain with G-Cter in SUMO2). 2 stretches are compositionally biased toward polar residues: residues 154–179 (IEVTESSSTPEQTEVQIQETSTEQSK) and 207–224 (SDEQPQESQADLETSDNS). Positions 154–224 (IEVTESSSTP…QADLETSDNS (71 aa)) are disordered. The C2H2-type 2 zinc finger occupies 230-253 (LICCLCRKEFNSRRGVRRHIRKVH). Residue Lys279 forms a Glycyl lysine isopeptide (Lys-Gly) (interchain with G-Cter in SUMO2) linkage. The C2H2-type 3 zinc-finger motif lies at 287–310 (RSCPVCCKSFATKANVRRHFDEVH). Ser317 carries the phosphoserine modification. Position 319 is a phosphothreonine (Thr319). The interval 328 to 349 (QPLFLDSISPKKSFKTRKQKSS) is disordered. Residue Ser336 is modified to Phosphoserine. Residues 339–348 (KSFKTRKQKS) show a composition bias toward basic residues. Residues 357–382 (TACKCLLCKRKYSSQIMLKRHMQIVH) form a C2H2-type 4 zinc finger. A disordered region spans residues 388-476 (GTNSKREKGP…GGQQKTRKPK (89 aa)). Lys392 participates in a covalent cross-link: Glycyl lysine isopeptide (Lys-Gly) (interchain with G-Cter in SUMO2). Residue Lys409 forms a Glycyl lysine isopeptide (Lys-Gly) (interchain with G-Cter in SUMO1); alternate linkage. A Glycyl lysine isopeptide (Lys-Gly) (interchain with G-Cter in SUMO2); alternate cross-link involves residue Lys409. The segment covering 416–436 (VESSPPSITHSPQNELKGTNH) has biased composition (polar residues). 6 positions are modified to phosphoserine: Ser422, Ser426, Ser455, Ser457, Ser460, and Ser462. Residues 458 to 470 (PKSTSPSAAGGQQ) are compositionally biased toward polar residues. A Glycyl lysine isopeptide (Lys-Gly) (interchain with G-Cter in SUMO2) cross-link involves residue Lys476. C2H2-type zinc fingers lie at residues 486–508 (LYCKLCKRQFTSKQNLTKHIELH) and 519–542 (YKCPLCTYETRRKRDVIRHITVVH). Disordered stretches follow at residues 574–599 (KRGPSRDEAKHSDSKHDGTSNSPSKK) and 635–664 (HHKKTHKANASNSPEGNKTKGRSTRSKALV). A compositionally biased stretch (basic and acidic residues) spans 577-591 (PSRDEAKHSDSKHDG). Lys599 participates in a covalent cross-link: Glycyl lysine isopeptide (Lys-Gly) (interchain with G-Cter in SUMO2). A C2H2-type 7 zinc finger spans residues 618–640 (HRCNKCGKAFAKKTYLEHHKKTH). Over residues 653–664 (TKGRSTRSKALV) the composition is skewed to basic residues.

This sequence belongs to the krueppel C2H2-type zinc-finger protein family.

Its subcellular location is the nucleus. In terms of biological role, may be involved in transcriptional regulation. In Homo sapiens (Human), this protein is Zinc finger protein 800 (ZNF800).